Reading from the N-terminus, the 136-residue chain is uncharacterized protein (136 aa).

The next 4 membrane-spanning stretches (helical) occupy residues 10-32 (SAGIAFFVFIISAIILPGFFIWI), 44-66 (LRCGMANFAAVVITAVVAFILHF), 70-89 (VLLLPLLAFLIYLYVLKTLL), and 102-124 (IAGVVIFLLAVILLLIFGVWLLF).

The protein resides in the cell membrane. This is an uncharacterized protein from Archaeoglobus fulgidus (strain ATCC 49558 / DSM 4304 / JCM 9628 / NBRC 100126 / VC-16).